Here is a 321-residue protein sequence, read N- to C-terminus: Cytochrome f (321 aa).

The signal sequence occupies residues M1–V35. Heme-binding residues include Y38, C58, C61, and H62. The chain crosses the membrane as a helical span at residues M287–K307.

Belongs to the cytochrome f family. The 4 large subunits of the cytochrome b6-f complex are cytochrome b6, subunit IV (17 kDa polypeptide, petD), cytochrome f and the Rieske protein, while the 4 small subunits are PetG, PetL, PetM and PetN. The complex functions as a dimer. It depends on heme as a cofactor.

The protein localises to the plastid. Its subcellular location is the chloroplast thylakoid membrane. Its function is as follows. Component of the cytochrome b6-f complex, which mediates electron transfer between photosystem II (PSII) and photosystem I (PSI), cyclic electron flow around PSI, and state transitions. The chain is Cytochrome f from Chara vulgaris (Common stonewort).